The chain runs to 400 residues: Elongation factor Tu (400 aa).

In terms of domain architecture, tr-type G spans 10–209 (KPHVNVGTIG…AVDSYIPTPE (200 aa)). The G1 stretch occupies residues 19 to 26 (GHVDHGKT). Residue 19 to 26 (GHVDHGKT) coordinates GTP. A Mg(2+)-binding site is contributed by Thr26. Positions 60–64 (GITIS) are G2. Residues 81–84 (DCPG) are G3. GTP contacts are provided by residues 81–85 (DCPGH) and 136–139 (NKAD). The tract at residues 136–139 (NKAD) is G4. The tract at residues 174-176 (SGL) is G5.

Belongs to the TRAFAC class translation factor GTPase superfamily. Classic translation factor GTPase family. EF-Tu/EF-1A subfamily. Monomer.

It is found in the cytoplasm. The enzyme catalyses GTP + H2O = GDP + phosphate + H(+). Functionally, GTP hydrolase that promotes the GTP-dependent binding of aminoacyl-tRNA to the A-site of ribosomes during protein biosynthesis. The sequence is that of Elongation factor Tu from Desulfitobacterium hafniense (strain DSM 10664 / DCB-2).